We begin with the raw amino-acid sequence, 184 residues long: Probable DNA-directed RNA polymerase subunit delta (184 aa).

The region spanning 14–81 (LSMIEVARAI…GENVWALRSW (68 aa)) is the HTH HARE-type domain. 2 disordered regions span residues 88–107 (DEEV…KHHK) and 118–184 (GDDD…DEDD). The span at 118-164 (GDDDIIDYDNDDPEDDDLDAATDDSDDDYSDDDSDYDEDNDDADDVL) shows a compositional bias: acidic residues.

The protein belongs to the RpoE family. In terms of assembly, RNAP is composed of a core of 2 alpha, a beta and a beta' subunits. The core is associated with a delta subunit and one of several sigma factors.

In terms of biological role, participates in both the initiation and recycling phases of transcription. In the presence of the delta subunit, RNAP displays an increased specificity of transcription, a decreased affinity for nucleic acids, and an increased efficiency of RNA synthesis because of enhanced recycling. The sequence is that of Probable DNA-directed RNA polymerase subunit delta from Lactobacillus acidophilus (strain ATCC 700396 / NCK56 / N2 / NCFM).